The primary structure comprises 612 residues: Dihydroxy-acid dehydratase (612 aa).

Residue D81 coordinates Mg(2+). C122 is a [2Fe-2S] cluster binding site. Positions 123 and 124 each coordinate Mg(2+). K124 is subject to N6-carboxylysine. C195 contributes to the [2Fe-2S] cluster binding site. E491 provides a ligand contact to Mg(2+). Catalysis depends on S517, which acts as the Proton acceptor.

It belongs to the IlvD/Edd family. Homodimer. It depends on [2Fe-2S] cluster as a cofactor. Requires Mg(2+) as cofactor.

It catalyses the reaction (2R)-2,3-dihydroxy-3-methylbutanoate = 3-methyl-2-oxobutanoate + H2O. The enzyme catalyses (2R,3R)-2,3-dihydroxy-3-methylpentanoate = (S)-3-methyl-2-oxopentanoate + H2O. The protein operates within amino-acid biosynthesis; L-isoleucine biosynthesis; L-isoleucine from 2-oxobutanoate: step 3/4. It participates in amino-acid biosynthesis; L-valine biosynthesis; L-valine from pyruvate: step 3/4. Functionally, functions in the biosynthesis of branched-chain amino acids. Catalyzes the dehydration of (2R,3R)-2,3-dihydroxy-3-methylpentanoate (2,3-dihydroxy-3-methylvalerate) into 2-oxo-3-methylpentanoate (2-oxo-3-methylvalerate) and of (2R)-2,3-dihydroxy-3-methylbutanoate (2,3-dihydroxyisovalerate) into 2-oxo-3-methylbutanoate (2-oxoisovalerate), the penultimate precursor to L-isoleucine and L-valine, respectively. The protein is Dihydroxy-acid dehydratase of Bartonella henselae (strain ATCC 49882 / DSM 28221 / CCUG 30454 / Houston 1) (Rochalimaea henselae).